The primary structure comprises 393 residues: Prokineticin receptor 1 (393 aa).

Topologically, residues 1-63 (MEITMGVMDE…NSRTFFAAKI (63 aa)) are extracellular. N-linked (GlcNAc...) asparagine glycosylation is found at N11, N14, and N36. Residues 64-84 (VIGMALVGIMLVCGIGNFIFI) traverse the membrane as a helical segment. At 85–98 (AALARYKKLRNLTN) the chain is on the cytoplasmic side. A helical membrane pass occupies residues 99 to 119 (LLIANLAISDFLVAIVCCPFE). Residues 120-145 (MDYYVVRQLSWEHGHVLCASVNYLRT) are Extracellular-facing. C137 and C217 are joined by a disulfide. A helical transmembrane segment spans residues 146–166 (VSLYVSTNALLAIAIDRYLAI). At 167–179 (VHPLRPRMKYQTA) the chain is on the cytoplasmic side. A helical transmembrane segment spans residues 180–200 (TGLIALVWVVSILVAIPSAYF). The Extracellular portion of the chain corresponds to 201 to 232 (TTETVLVIVKSQEKIFCGQIWPVDQQIYYKSY). Residues 233–253 (FLFIFGIEFVGPVVTMTLCYA) form a helical membrane-spanning segment. The Cytoplasmic segment spans residues 254 to 282 (RISRELWFKAVPGFQTEQIRKRLRCRRKT). A helical membrane pass occupies residues 283 to 303 (VLVLMCILTAYVLCWAPFYGF). The Extracellular segment spans residues 304 to 322 (AIVRDFFPTVFVKEKHYLT). The helical transmembrane segment at 323–343 (AFYVVECIAMSNSMINTVCFV) threads the bilayer. Topologically, residues 344–393 (TVKNNTIKYFKKIMLLHWKASYNGSKSSGDLDLKTTGVPATEEVDCIGLK) are cytoplasmic.

This sequence belongs to the G-protein coupled receptor 1 family.

It localises to the cell membrane. Functionally, receptor for prokineticin 1. Exclusively coupled to the G(q) subclass of heteromeric G proteins. Activation leads to mobilization of calcium, stimulation of phosphoinositide turnover and activation of p44/p42 mitogen-activated protein kinase. May play a role during early pregnancy. This is Prokineticin receptor 1 (PROKR1) from Bos taurus (Bovine).